The primary structure comprises 236 residues: Small ribosomal subunit protein uS3 (236 aa).

Residues 39–107 (IRKFLKKELY…EISINIKEVK (69 aa)) enclose the KH type-2 domain. Over residues 213–229 (QPEKKEEAPARDKEGRG) the composition is skewed to basic and acidic residues. The segment at 213-236 (QPEKKEEAPARDKEGRGTRRRGRQ) is disordered.

Belongs to the universal ribosomal protein uS3 family. Part of the 30S ribosomal subunit. Forms a tight complex with proteins S10 and S14.

Binds the lower part of the 30S subunit head. Binds mRNA in the 70S ribosome, positioning it for translation. This is Small ribosomal subunit protein uS3 from Wolinella succinogenes (strain ATCC 29543 / DSM 1740 / CCUG 13145 / JCM 31913 / LMG 7466 / NCTC 11488 / FDC 602W) (Vibrio succinogenes).